A 55-amino-acid polypeptide reads, in one-letter code: Large ribosomal subunit protein bL33 (55 aa).

The protein belongs to the bacterial ribosomal protein bL33 family.

The protein is Large ribosomal subunit protein bL33 of Polaromonas sp. (strain JS666 / ATCC BAA-500).